Here is a 269-residue protein sequence, read N- to C-terminus: Formamidopyrimidine-DNA glycosylase (269 aa).

Pro-2 serves as the catalytic Schiff-base intermediate with DNA. The active-site Proton donor is the Glu-3. Lys-57 acts as the Proton donor; for beta-elimination activity in catalysis. DNA is bound by residues His-90, Arg-109, and Lys-150. The FPG-type zinc-finger motif lies at 235–269; that stretch reads QVYGRKGEPCRVCGTPIVATKHAQRATFYCRHCQK. Arg-259 (proton donor; for delta-elimination activity) is an active-site residue.

The protein belongs to the FPG family. As to quaternary structure, monomer. Zn(2+) is required as a cofactor.

The catalysed reaction is Hydrolysis of DNA containing ring-opened 7-methylguanine residues, releasing 2,6-diamino-4-hydroxy-5-(N-methyl)formamidopyrimidine.. It carries out the reaction 2'-deoxyribonucleotide-(2'-deoxyribose 5'-phosphate)-2'-deoxyribonucleotide-DNA = a 3'-end 2'-deoxyribonucleotide-(2,3-dehydro-2,3-deoxyribose 5'-phosphate)-DNA + a 5'-end 5'-phospho-2'-deoxyribonucleoside-DNA + H(+). Its function is as follows. Involved in base excision repair of DNA damaged by oxidation or by mutagenic agents. Acts as a DNA glycosylase that recognizes and removes damaged bases. Has a preference for oxidized purines, such as 7,8-dihydro-8-oxoguanine (8-oxoG). Has AP (apurinic/apyrimidinic) lyase activity and introduces nicks in the DNA strand. Cleaves the DNA backbone by beta-delta elimination to generate a single-strand break at the site of the removed base with both 3'- and 5'-phosphates. This is Formamidopyrimidine-DNA glycosylase from Salmonella heidelberg (strain SL476).